The sequence spans 1373 residues: DNA-directed RNA polymerase subunit beta (1373 aa).

It belongs to the RNA polymerase beta chain family. In terms of assembly, the RNAP catalytic core consists of 2 alpha, 1 beta, 1 beta' and 1 omega subunit. When a sigma factor is associated with the core the holoenzyme is formed, which can initiate transcription.

It carries out the reaction RNA(n) + a ribonucleoside 5'-triphosphate = RNA(n+1) + diphosphate. DNA-dependent RNA polymerase catalyzes the transcription of DNA into RNA using the four ribonucleoside triphosphates as substrates. The polypeptide is DNA-directed RNA polymerase subunit beta (Rickettsia akari (strain Hartford)).